Consider the following 376-residue polypeptide: Putative F-box/FBD/LRR-repeat protein At5g52460 (376 aa).

The region spanning 16 to 75 (RDEISSLPDDLLIQILLLVPIKDAVGTMILSKRWRYVWTLLPKLEYSDPGDECESVWKFL) is the F-box domain. LRR repeat units follow at residues 131-154 (CKTLVELTLSDKIIVDVPSSVCLP) and 199-224 (FAKVHKLRLEKPHIDVVCHTDDKFLK). Residues 296–348 (CHGTNQGTVPRCLSAHLDEEFVWHGYRGNEEETQLIRYIFANAKCLKKREIST) enclose the FBD domain.

This Arabidopsis thaliana (Mouse-ear cress) protein is Putative F-box/FBD/LRR-repeat protein At5g52460 (EDA41).